We begin with the raw amino-acid sequence, 65 residues long: Large ribosomal subunit protein bL35 (65 aa).

The tract at residues 1–40 (MPKMKTNSGSKKRFALTGTGKIKRKHAFHSHILTKKSKKR) is disordered. Basic residues predominate over residues 21–40 (KIKRKHAFHSHILTKKSKKR).

Belongs to the bacterial ribosomal protein bL35 family.

This Bacteroides fragilis (strain ATCC 25285 / DSM 2151 / CCUG 4856 / JCM 11019 / LMG 10263 / NCTC 9343 / Onslow / VPI 2553 / EN-2) protein is Large ribosomal subunit protein bL35.